An 88-amino-acid polypeptide reads, in one-letter code: Co-chaperonin GroES (88 aa).

The protein belongs to the GroES chaperonin family. As to quaternary structure, heptamer of 7 subunits arranged in a ring. Interacts with the chaperonin GroEL.

It localises to the cytoplasm. Together with the chaperonin GroEL, plays an essential role in assisting protein folding. The GroEL-GroES system forms a nano-cage that allows encapsulation of the non-native substrate proteins and provides a physical environment optimized to promote and accelerate protein folding. GroES binds to the apical surface of the GroEL ring, thereby capping the opening of the GroEL channel. This is Co-chaperonin GroES from Thermodesulfovibrio yellowstonii (strain ATCC 51303 / DSM 11347 / YP87).